The chain runs to 338 residues: Ketol-acid reductoisomerase (NADP(+)) (338 aa).

Residues 1 to 181 (MQVYYDKDAD…GGGRAGVIET (181 aa)) enclose the KARI N-terminal Rossmann domain. Residues 24 to 27 (YGSQ), Arg-47, Ser-50, Ser-52, and 82 to 85 (DEHQ) each bind NADP(+). His-107 is an active-site residue. Residue Gly-133 coordinates NADP(+). One can recognise a KARI C-terminal knotted domain in the interval 182-327 (SFKDETETDL…AKLRDMMPWI (146 aa)). Mg(2+)-binding residues include Asp-190, Glu-194, Glu-226, and Glu-230. Ser-251 is a binding site for substrate.

The protein belongs to the ketol-acid reductoisomerase family. It depends on Mg(2+) as a cofactor.

The catalysed reaction is (2R)-2,3-dihydroxy-3-methylbutanoate + NADP(+) = (2S)-2-acetolactate + NADPH + H(+). It catalyses the reaction (2R,3R)-2,3-dihydroxy-3-methylpentanoate + NADP(+) = (S)-2-ethyl-2-hydroxy-3-oxobutanoate + NADPH + H(+). It participates in amino-acid biosynthesis; L-isoleucine biosynthesis; L-isoleucine from 2-oxobutanoate: step 2/4. The protein operates within amino-acid biosynthesis; L-valine biosynthesis; L-valine from pyruvate: step 2/4. Its function is as follows. Involved in the biosynthesis of branched-chain amino acids (BCAA). Catalyzes an alkyl-migration followed by a ketol-acid reduction of (S)-2-acetolactate (S2AL) to yield (R)-2,3-dihydroxy-isovalerate. In the isomerase reaction, S2AL is rearranged via a Mg-dependent methyl migration to produce 3-hydroxy-3-methyl-2-ketobutyrate (HMKB). In the reductase reaction, this 2-ketoacid undergoes a metal-dependent reduction by NADPH to yield (R)-2,3-dihydroxy-isovalerate. This is Ketol-acid reductoisomerase (NADP(+)) from Thioalkalivibrio sulfidiphilus (strain HL-EbGR7).